Here is a 335-residue protein sequence, read N- to C-terminus: uncharacterized protein (335 aa).

Residues Val21–Asn258 enclose the ABC transporter domain. Residue Gly60–Thr67 participates in ATP binding.

This sequence belongs to the ABC transporter superfamily.

This is an uncharacterized protein from Nostoc sp. (strain PCC 7120 / SAG 25.82 / UTEX 2576).